The following is a 304-amino-acid chain: MTRQMILAVGQQGPIARAETREQVVVRLLYMLTKAASRGANFIVFPELAFTTFFPRWHFTDEAELDSFYETEMPGPVVRPLFEKAAELGIGFNLGYAELVVEGGVKRRFNTSILVDKPGKIVGKYRKIHLPGHKEYEAYRPFQHLEKRYFEPGDLGFPVYDVDAAKMGMFICNDRRWPEAWRVMGLRGAEIICGGYNTPTHNPPVPQHDHLTSFHHLLSMQAGSYQNGAWSAAAGKVGMEENCMLLGHSCIVAPTGEIVALTTTLEDEVITAAVCLDRCRELREHIFNFKQHRQPQHYGLIAEL.

The CN hydrolase domain occupies 5–276; that stretch reads MILAVGQQGP…DEVITAAVCL (272 aa). Catalysis depends on residues E47, K127, and C172.

In terms of assembly, homotetramer.

The catalysed reaction is an N-carbamoyl-D-amino acid + H2O + 2 H(+) = a D-alpha-amino acid + NH4(+) + CO2. Its activity is regulated as follows. The activity decreases with increasing concentration of H(2)O(2). Has 68% and 43% of activity remaining upon treatment with 0.1 and 0.2 mM H(2)O(2) for 30 minutes, respectively. Inhibited significantly by 2 mM Zn(2+), Cu(2+) and Ag(+), moderately by Co(2+), Mn(2+), Sn(2+) and Mg(2+), and only slightly by Ba(2+). Slightly activated by Fe(2+) and Ca(2+). No effect on activity by metal chelators EDTA and 8-hydroxyquinoline at 2 mM or by dithiothreitol, 2-mercaptoethanol or phenylmethanesulfonyl fluoride. Catalyzes the hydrolysis of N-carbamoyl-D-amino acids to the corresponding D-amino acids. Hydrolyzes aromatic and aliphatic N-carbamoyl-D-amino acids in vitro. Effectively hydrolyzes N-carbamoyl-D-p-hydroxyphenylglycine and N-carbamoyl-DL-p-hydroxyphenylglycine, and to a lesser extent N-carbamoyl-D-methionine. No activity for N-carbamoyl-L-amino acids, N-carbamoyl-beta-alanine or (RS)-alpha-ethyl-N-carbamoylphenylglycine in vitro. This Ensifer adhaerens (Sinorhizobium morelense) protein is N-carbamoyl-D-amino acid hydrolase.